Here is a 187-residue protein sequence, read N- to C-terminus: Apolipophorin-3 (187 aa).

A signal peptide spans methionine 1–alanine 17. Positions serine 18–arginine 22 are excised as a propeptide.

The protein belongs to the insect apolipophorin-3 family. Equilibrium between a soluble monomer and a bound lipoprotein form. Apolipophorin-3 associates with lipophorin during lipid loading until each particle contains 9 or 14 molecules of apolipophorin-3. As to expression, hemolymph.

The protein resides in the secreted. Functionally, assists in the loading of diacylglycerol, generated from triacylglycerol stores in the fat body through the action of adipokinetic hormone, into lipophorin, the hemolymph lipoprotein. It increases the lipid carrying capacity of lipophorin by covering the expanding hydrophobic surface resulting from diacylglycerol uptake. It thus plays a critical role in the transport of lipids during flight in several species of insects. In Hyphantria cunea (Fall webworm moth), this protein is Apolipophorin-3.